A 540-amino-acid chain; its full sequence is Glucose-6-phosphate isomerase (540 aa).

The Proton donor role is filled by E346. Active-site residues include H377 and K505.

Belongs to the GPI family.

It is found in the cytoplasm. It catalyses the reaction alpha-D-glucose 6-phosphate = beta-D-fructose 6-phosphate. It participates in carbohydrate biosynthesis; gluconeogenesis. The protein operates within carbohydrate degradation; glycolysis; D-glyceraldehyde 3-phosphate and glycerone phosphate from D-glucose: step 2/4. Its function is as follows. Catalyzes the reversible isomerization of glucose-6-phosphate to fructose-6-phosphate. This chain is Glucose-6-phosphate isomerase, found in Francisella tularensis subsp. holarctica (strain FTNF002-00 / FTA).